Consider the following 449-residue polypeptide: Bifunctional protein GlmU (449 aa).

The pyrophosphorylase stretch occupies residues 1–229 (MKLSAVILAA…EEDIYGINDR (229 aa)). UDP-N-acetyl-alpha-D-glucosamine contacts are provided by residues 8–11 (LAAG), K22, Q73, and 78–79 (GT). Residue D102 coordinates Mg(2+). Positions 139, 154, 169, and 227 each coordinate UDP-N-acetyl-alpha-D-glucosamine. N227 contributes to the Mg(2+) binding site. Residues 230–250 (VQLAQAENILRQRKNRELMLS) form a linker region. Positions 251-449 (GVSLMDPAST…AGQKHLPRKG (199 aa)) are N-acetyltransferase. UDP-N-acetyl-alpha-D-glucosamine contacts are provided by R332 and K350. H362 acts as the Proton acceptor in catalysis. UDP-N-acetyl-alpha-D-glucosamine is bound by residues Y365 and N376. Acetyl-CoA is bound by residues A379, 385–386 (NY), S404, A422, and R439.

It in the N-terminal section; belongs to the N-acetylglucosamine-1-phosphate uridyltransferase family. The protein in the C-terminal section; belongs to the transferase hexapeptide repeat family. In terms of assembly, homotrimer. Requires Mg(2+) as cofactor.

It is found in the cytoplasm. The enzyme catalyses alpha-D-glucosamine 1-phosphate + acetyl-CoA = N-acetyl-alpha-D-glucosamine 1-phosphate + CoA + H(+). It catalyses the reaction N-acetyl-alpha-D-glucosamine 1-phosphate + UTP + H(+) = UDP-N-acetyl-alpha-D-glucosamine + diphosphate. Its pathway is nucleotide-sugar biosynthesis; UDP-N-acetyl-alpha-D-glucosamine biosynthesis; N-acetyl-alpha-D-glucosamine 1-phosphate from alpha-D-glucosamine 6-phosphate (route II): step 2/2. The protein operates within nucleotide-sugar biosynthesis; UDP-N-acetyl-alpha-D-glucosamine biosynthesis; UDP-N-acetyl-alpha-D-glucosamine from N-acetyl-alpha-D-glucosamine 1-phosphate: step 1/1. It functions in the pathway bacterial outer membrane biogenesis; LPS lipid A biosynthesis. Functionally, catalyzes the last two sequential reactions in the de novo biosynthetic pathway for UDP-N-acetylglucosamine (UDP-GlcNAc). The C-terminal domain catalyzes the transfer of acetyl group from acetyl coenzyme A to glucosamine-1-phosphate (GlcN-1-P) to produce N-acetylglucosamine-1-phosphate (GlcNAc-1-P), which is converted into UDP-GlcNAc by the transfer of uridine 5-monophosphate (from uridine 5-triphosphate), a reaction catalyzed by the N-terminal domain. The polypeptide is Bifunctional protein GlmU (Syntrophomonas wolfei subsp. wolfei (strain DSM 2245B / Goettingen)).